The chain runs to 248 residues: DNA-directed RNA polymerase subunit Rpo3 (248 aa).

It belongs to the archaeal Rpo3/eukaryotic RPB3 RNA polymerase subunit family. Part of the RNA polymerase complex.

The protein localises to the cytoplasm. The catalysed reaction is RNA(n) + a ribonucleoside 5'-triphosphate = RNA(n+1) + diphosphate. Its function is as follows. DNA-dependent RNA polymerase (RNAP) catalyzes the transcription of DNA into RNA using the four ribonucleoside triphosphates as substrates. This chain is DNA-directed RNA polymerase subunit Rpo3, found in Halobacterium salinarum (strain ATCC 29341 / DSM 671 / R1).